The primary structure comprises 477 residues: Adenosylhomocysteinase (477 aa).

Residues Thr-63, Asp-142, and Glu-202 each coordinate substrate. Position 203-205 (203-205 (TTT)) interacts with NAD(+). Substrate contacts are provided by Lys-232 and Asp-236. Residues Asn-237, 266–271 (GYGDVG), Glu-289, Asn-324, 345–347 (IGH), and Asn-390 each bind NAD(+).

Belongs to the adenosylhomocysteinase family. Requires NAD(+) as cofactor.

It localises to the cytoplasm. It carries out the reaction S-adenosyl-L-homocysteine + H2O = L-homocysteine + adenosine. The protein operates within amino-acid biosynthesis; L-homocysteine biosynthesis; L-homocysteine from S-adenosyl-L-homocysteine: step 1/1. May play a key role in the regulation of the intracellular concentration of adenosylhomocysteine. In Methylibium petroleiphilum (strain ATCC BAA-1232 / LMG 22953 / PM1), this protein is Adenosylhomocysteinase.